The following is a 393-amino-acid chain: Cysteine protease ATG4B (393 aa).

An N-acetylmethionine modification is found at Met-1. Ser-34 carries the post-translational modification Phosphoserine. Cys-74 acts as the Nucleophile in catalysis. Cys-189 is modified (S-nitrosocysteine). Active-site residues include Asp-278 and His-280. S-nitrosocysteine is present on residues Cys-292 and Cys-301. A disulfide bond links Cys-292 and Cys-361. Residues Ser-316 and Ser-383 each carry the phosphoserine modification. The LIR signature appears at Phe-388 to Leu-391. Ser-392 carries the post-translational modification Phosphoserine.

It belongs to the peptidase C54 family. In terms of assembly, interacts with PFKP; promoting phosphorylation of ATG4B at Ser-34. Interacts with GBP7. In terms of processing, phosphorylation at Ser-383 and Ser-392 promotes autophagy by increasing protein delipidation activity without affecting proteolytic activation of ATG8 proteins. Phosphorylation at Ser-316 by ULK1 inhibits autophagy by decreasing both proteolytic activation and delipidation activities. Phosphorylation at Ser-316 is dephosphorylated by protein phosphatase 2A (PP2A). Phosphorylation at Ser-34 by AKT2 promotes its hydrolase activity, leading to increased proteolytic activation and delipidation of ATG8 family proteins. Phosphorylation at Ser-34 by AKT1 promotes mitochondrial localization and inhibition of the F1F0-ATP synthase activity, leading to elevation of mitochondrial reactive oxygen species (ROS). Ubiquitinated by RNF5, leading to its degradation by the proteasome. Post-translationally, S-nitrosylation at Cys-189 and Cys-292 in response to high glucose decreases both proteolytic activation and delipidation activities. In terms of processing, O-glycosylated by OGT, leading to increase protease activity, thereby promoting the proteolytic activation of ATG8 family proteins. Forms reversible intrachain disulfide bonds in response to oxidative stress. Forms interchain disulfide bonds, leading to formation of homooligomers in response to oxidation.

The protein resides in the cytoplasm. The protein localises to the cytosol. Its subcellular location is the cytoplasmic vesicle. It localises to the autophagosome. It is found in the endoplasmic reticulum. The protein resides in the mitochondrion. It catalyses the reaction [protein]-C-terminal L-amino acid-glycyl-phosphatidylethanolamide + H2O = [protein]-C-terminal L-amino acid-glycine + a 1,2-diacyl-sn-glycero-3-phosphoethanolamine. The catalysed reaction is [protein]-C-terminal L-amino acid-glycyl-phosphatidylserine + H2O = [protein]-C-terminal L-amino acid-glycine + a 1,2-diacyl-sn-glycero-3-phospho-L-serine. Its activity is regulated as follows. Inhibited by N-ethylmaleimide. Redox-regulated during autophagy since reducing conditions activate ATG4A whereas an oxidizing environment such as the presence of H(2)O(2) inhibits its activity. The cysteine protease activity compounds is inhibited by styrylquinoline compounds 4-28 and LV-320. Cysteine protease that plays a key role in autophagy by mediating both proteolytic activation and delipidation of ATG8 family proteins. Required for canonical autophagy (macroautophagy), non-canonical autophagy as well as for mitophagy. The protease activity is required for proteolytic activation of ATG8 family proteins: cleaves the C-terminal amino acid of ATG8 proteins MAP1LC3A, MAP1LC3B, MAP1LC3C, GABARAPL1, GABARAPL2 and GABARAP, to reveal a C-terminal glycine. Exposure of the glycine at the C-terminus is essential for ATG8 proteins conjugation to phosphatidylethanolamine (PE) and insertion to membranes, which is necessary for autophagy. Protease activity is also required to counteract formation of high-molecular weight conjugates of ATG8 proteins (ATG8ylation): acts as a deubiquitinating-like enzyme that removes ATG8 conjugated to other proteins, such as ATG3. In addition to the protease activity, also mediates delipidation of ATG8 family proteins. Catalyzes delipidation of PE-conjugated forms of ATG8 proteins during macroautophagy. Also involved in non-canonical autophagy, a parallel pathway involving conjugation of ATG8 proteins to single membranes at endolysosomal compartments, by catalyzing delipidation of ATG8 proteins conjugated to phosphatidylserine (PS). Compared to other members of the family (ATG4A, ATG4C or ATG4C), constitutes the major protein for proteolytic activation of ATG8 proteins, while it displays weaker delipidation activity than other ATG4 paralogs. Involved in phagophore growth during mitophagy independently of its protease activity and of ATG8 proteins: acts by regulating ATG9A trafficking to mitochondria and promoting phagophore-endoplasmic reticulum contacts during the lipid transfer phase of mitophagy. This is Cysteine protease ATG4B from Mus musculus (Mouse).